Consider the following 209-residue polypeptide: Uracil phosphoribosyltransferase (209 aa).

Residues Arg-79, Arg-104, and Asp-131 to Ser-139 each bind 5-phospho-alpha-D-ribose 1-diphosphate. Residues Ile-194 and Gly-199–Ala-201 contribute to the uracil site. Asp-200 is a 5-phospho-alpha-D-ribose 1-diphosphate binding site.

This sequence belongs to the UPRTase family. Requires Mg(2+) as cofactor.

It catalyses the reaction UMP + diphosphate = 5-phospho-alpha-D-ribose 1-diphosphate + uracil. It functions in the pathway pyrimidine metabolism; UMP biosynthesis via salvage pathway; UMP from uracil: step 1/1. Its activity is regulated as follows. Allosterically activated by GTP. Functionally, catalyzes the conversion of uracil and 5-phospho-alpha-D-ribose 1-diphosphate (PRPP) to UMP and diphosphate. The protein is Uracil phosphoribosyltransferase of Shouchella clausii (strain KSM-K16) (Alkalihalobacillus clausii).